Reading from the N-terminus, the 317-residue chain is Ribosome production factor 2 homolog (317 aa).

The 213-residue stretch at 28-240 folds into the Brix domain; it reads KTAIFLRGNA…IRRVQPAESD (213 aa). The segment at 287 to 317 is disordered; that stretch reads MKGLKRSVEEREDSENEEVEIEEDVISDASE. 4 positions are modified to phosphoserine: Ser-293, Ser-300, Ser-313, and Ser-316. Acidic residues predominate over residues 296 to 317; that stretch reads EREDSENEEVEIEEDVISDASE.

Belongs to the RPF2 family. In terms of assembly, component of a hexameric 5S RNP precursor complex, composed of 5S RNA, rrs1, rpf2, rpl5a/rpl5b, rpl11a/rpl11b and syo1; this complex acts as a precursor for ribosome assembly.

Its subcellular location is the nucleus. The protein resides in the nucleolus. The chain is Ribosome production factor 2 homolog from Schizosaccharomyces pombe (strain 972 / ATCC 24843) (Fission yeast).